We begin with the raw amino-acid sequence, 512 residues long: D-alanine--D-alanyl carrier protein ligase (512 aa).

Residue T152–S153 participates in ATP binding. D199 contributes to the D-alanine binding site. N294–T299 provides a ligand contact to ATP. A D-alanine-binding site is contributed by V303. ATP contacts are provided by residues D385, Y397–R400, and K499. D-alanine is bound at residue K499.

The protein belongs to the ATP-dependent AMP-binding enzyme family. DltA subfamily.

The protein localises to the cytoplasm. It catalyses the reaction holo-[D-alanyl-carrier protein] + D-alanine + ATP = D-alanyl-[D-alanyl-carrier protein] + AMP + diphosphate. It functions in the pathway cell wall biogenesis; lipoteichoic acid biosynthesis. Its function is as follows. Catalyzes the first step in the D-alanylation of lipoteichoic acid (LTA), the activation of D-alanine and its transfer onto the D-alanyl carrier protein (Dcp) DltC. In an ATP-dependent two-step reaction, forms a high energy D-alanyl-AMP intermediate, followed by transfer of the D-alanyl residue as a thiol ester to the phosphopantheinyl prosthetic group of the Dcp. D-alanylation of LTA plays an important role in modulating the properties of the cell wall in Gram-positive bacteria, influencing the net charge of the cell wall. The sequence is that of D-alanine--D-alanyl carrier protein ligase from Streptococcus pyogenes serotype M4 (strain MGAS10750).